A 601-amino-acid polypeptide reads, in one-letter code: Jacalin-related lectin 3 (601 aa).

3 consecutive Jacalin-type lectin domains span residues 13 to 155, 240 to 382, and 438 to 583; these read PASL…HTQP, AKTY…HVME, and PSGP…HMQH.

The protein belongs to the jacalin lectin family.

This chain is Jacalin-related lectin 3 (JAL3), found in Arabidopsis thaliana (Mouse-ear cress).